The following is a 162-amino-acid chain: Cytochrome c-type biogenesis protein CcmE (162 aa).

Over 1-8 the chain is Cytoplasmic; the sequence is MNPRRKKR. The helical; Signal-anchor for type II membrane protein transmembrane segment at 9–29 threads the bilayer; sequence LALVVGLIGGVAAVASLLLYA. The Periplasmic portion of the chain corresponds to 30–162; sequence LNTNLNLFYT…YTETQKGGSR (133 aa). 2 residues coordinate heme: H131 and Y135.

It belongs to the CcmE/CycJ family.

The protein resides in the cell inner membrane. Its function is as follows. Heme chaperone required for the biogenesis of c-type cytochromes. Transiently binds heme delivered by CcmC and transfers the heme to apo-cytochromes in a process facilitated by CcmF and CcmH. In Shewanella amazonensis (strain ATCC BAA-1098 / SB2B), this protein is Cytochrome c-type biogenesis protein CcmE.